Consider the following 134-residue polypeptide: Antifungal protein ginkbilobin-2 (134 aa).

The N-terminal stretch at 1–26 is a signal peptide; the sequence is MKTMRMNSAFILAFALAAAMLILTEA. Positions 29 to 134 constitute a Gnk2-homologous domain; the sequence is TAFVSSACNT…CFIQYEQRSF (106 aa). 3 disulfide bridges follow: cysteine 36–cysteine 112, cysteine 88–cysteine 97, and cysteine 100–cysteine 125. Residue asparagine 37 coordinates alpha-D-mannopyranose. Alpha-D-mannopyranose is bound by residues arginine 119 and glutamate 130.

Binds actin in vitro.

It localises to the secreted. Possesses antifungal activity against F.oxysporum, T.reesei and C.albicans. Weakly inhibits the aspartic acid protease pepsin activity. Exerts antifungal activity against S.cerevisiae and F.culmorum through its carbohydrate-binding specificity. Acts as a lectin that stricly recognizes alpha-1,2-linked mannose moieties and interacts with the yeast cell wall mannan polysaccharide. Can interfere with the fungal actin remodeling resulting to the activation of an actin-dependent cell death. The protein is Antifungal protein ginkbilobin-2 of Ginkgo biloba (Ginkgo).